Here is a 129-residue protein sequence, read N- to C-terminus: MKSFPRADRIGSSIQRGVSEILRKGLGDPRLDMATITGVKVSRDLGVAYVYYVIPGDTAGRAAAAAGFKSAEGFIKRSLAGMLKMKYMPDIRFRYDESFAYGQSIDTVLRELQTEKDDVPDSGRPPEDD.

The protein belongs to the RbfA family. In terms of assembly, monomer. Binds 30S ribosomal subunits, but not 50S ribosomal subunits or 70S ribosomes.

It localises to the cytoplasm. In terms of biological role, one of several proteins that assist in the late maturation steps of the functional core of the 30S ribosomal subunit. Associates with free 30S ribosomal subunits (but not with 30S subunits that are part of 70S ribosomes or polysomes). Required for efficient processing of 16S rRNA. May interact with the 5'-terminal helix region of 16S rRNA. This Desulfosudis oleivorans (strain DSM 6200 / JCM 39069 / Hxd3) (Desulfococcus oleovorans) protein is Ribosome-binding factor A.